A 278-amino-acid chain; its full sequence is MDLKAYFELIRLKNCLTAGFGALISGLIASNFTFGALFPLILAFLVVFFICGFGNSLNDIYDLKIDRINKPFRPIPSKRISLTDAKVFSYSIMIFGLIISLFNIYCFLMAVLNAVVLQKYAKIYKKNKIIGNMLVAYLTGSVFIFGGIAVGNVNVSLYLFSCAMFSMWAREIIKDYEDIEGDLKEKVSSLPIKYGEKSIYISLGLLLIAIGLSFLPYLTGIFGIYYLLMILICNLMFLAGFFNLLNAPSKKQARKTSKNIKLITNFVLIAFIIGSIFK.

Transmembrane regions (helical) follow at residues 12 to 32, 34 to 54, 92 to 112, 129 to 149, 199 to 219, 221 to 241, and 257 to 277; these read LKNC…ASNF, FGAL…CGFG, IMIF…MAVL, IIGN…GGIA, IYIS…PYLT, IFGI…LAGF, and SKNI…GSIF.

This sequence belongs to the UbiA prenyltransferase family. DGGGP synthase subfamily. Requires Mg(2+) as cofactor.

The protein resides in the cell membrane. The enzyme catalyses sn-3-O-(geranylgeranyl)glycerol 1-phosphate + (2E,6E,10E)-geranylgeranyl diphosphate = 2,3-bis-O-(geranylgeranyl)-sn-glycerol 1-phosphate + diphosphate. It participates in membrane lipid metabolism; glycerophospholipid metabolism. Functionally, prenyltransferase that catalyzes the transfer of the geranylgeranyl moiety of geranylgeranyl diphosphate (GGPP) to the C2 hydroxyl of (S)-3-O-geranylgeranylglyceryl phosphate (GGGP). This reaction is the second ether-bond-formation step in the biosynthesis of archaeal membrane lipids. This chain is Digeranylgeranylglyceryl phosphate synthase, found in Methanococcus vannielii (strain ATCC 35089 / DSM 1224 / JCM 13029 / OCM 148 / SB).